The chain runs to 1405 residues: Protein crumbs homolog 1 (1405 aa).

Residues 1–27 form the signal peptide; the sequence is MKLKRTAYLLFLYLSSSLLICIKNSFC. Over 28–1339 the chain is Extracellular; it reads NKNNTRCLSG…RCELDLADDR (1312 aa). The region spanning 30–67 is the EGF-like 1; atypical domain; the sequence is NNTRCLSGPCQNNSTCKHFPQDNNCCLDTANNLDKDCE. 33 disulfide bridges follow: cysteine 34-cysteine 45, cysteine 39-cysteine 54, cysteine 55-cysteine 66, cysteine 73-cysteine 84, cysteine 78-cysteine 95, cysteine 97-cysteine 106, cysteine 113-cysteine 124, cysteine 118-cysteine 133, cysteine 135-cysteine 144, cysteine 151-cysteine 162, cysteine 156-cysteine 171, cysteine 173-cysteine 182, cysteine 189-cysteine 200, cysteine 194-cysteine 209, cysteine 211-cysteine 220, cysteine 227-cysteine 238, cysteine 232-cysteine 247, cysteine 249-cysteine 258, cysteine 265-cysteine 276, cysteine 270-cysteine 285, cysteine 287-cysteine 297, cysteine 304-cysteine 315, cysteine 309-cysteine 324, cysteine 326-cysteine 335, cysteine 342-cysteine 353, cysteine 347-cysteine 382, cysteine 384-cysteine 393, cysteine 400-cysteine 411, cysteine 405-cysteine 420, cysteine 422-cysteine 437, cysteine 444-cysteine 455, cysteine 449-cysteine 468, and cysteine 470-cysteine 479. Asparagine 41 carries N-linked (GlcNAc...) asparagine glycosylation. EGF-like domains lie at 69 to 107 and 109 to 145; these read LKDP…LNCE and ATNS…RFCE. An EGF-like 4; calcium-binding domain is found at 147–183; that stretch reads DHNECASSPCHNGAMCQDGINGYSCFCVPGYQGRHCD. Residues 185 to 221 enclose the EGF-like 5; calcium-binding domain; it reads EVDECVSDPCKNEAVCLNEIGRYTCVCPQEFSGVNCE. In terms of domain architecture, EGF-like 6; calcium-binding spans 223-259; it reads EIDECRSQPCLHGATCQDAPGGYSCDCAPGFLGEHCE. EGF-like domains follow at residues 261 to 298, 300 to 336, 338 to 394, 396 to 438, and 440 to 480; these read SVNE…MHCE, LIPL…ALCE, DINE…IHCE, DVDE…ENCS, and ILLG…PLCE. In terms of domain architecture, Laminin G-like 1 spans 482-669; that stretch reads VTTLSFGSNG…GLSSNVKAGC (188 aa). Residues asparagine 560 and asparagine 656 are each glycosylated (N-linked (GlcNAc...) asparagine). 4 cysteine pairs are disulfide-bonded: cysteine 641/cysteine 669, cysteine 675/cysteine 686, cysteine 680/cysteine 695, and cysteine 697/cysteine 706. Positions 671 to 707 constitute an EGF-like 12 domain; that stretch reads GKDWCESQPCQNRGRCINLWQGYQCECDRPYTGSNCL. The Laminin G-like 2 domain occupies 713–884; the sequence is GRFGQDDSTG…PILVNVTQGC (172 aa). N-linked (GlcNAc...) asparagine glycans are attached at residues asparagine 756 and asparagine 879. Disulfide bonds link cysteine 850/cysteine 884, cysteine 890/cysteine 901, cysteine 895/cysteine 910, cysteine 912/cysteine 921, cysteine 927/cysteine 938, and cysteine 932/cysteine 947. EGF-like domains lie at 886-922 and 923-959; these read GDNT…RACE and QVQW…LSRE. Residues 950–1136 enclose the Laminin G-like 3 domain; that stretch reads NAVFSGLSRE…VSTNMVLTGC (187 aa). 3 N-linked (GlcNAc...) asparagine glycosylation sites follow: asparagine 967, asparagine 974, and asparagine 999. Intrachain disulfides connect cysteine 1095-cysteine 1136, cysteine 1142-cysteine 1153, cysteine 1147-cysteine 1162, cysteine 1164-cysteine 1173, cysteine 1180-cysteine 1190, cysteine 1185-cysteine 1199, cysteine 1201-cysteine 1210, cysteine 1217-cysteine 1228, cysteine 1222-cysteine 1237, cysteine 1239-cysteine 1248, cysteine 1258-cysteine 1273, cysteine 1267-cysteine 1282, cysteine 1284-cysteine 1293, cysteine 1300-cysteine 1311, cysteine 1305-cysteine 1320, and cysteine 1322-cysteine 1331. The EGF-like 15 domain maps to 1138–1174; sequence PSNACHSSPCLHGGNCEDSYSSYRCACLSGWSGTHCE. The region spanning 1176-1211 is the EGF-like 16; calcium-binding domain; it reads NIDECFSSPCIHGNCSDGVAAYHCRCEPGYTGVNCE. An N-linked (GlcNAc...) asparagine glycan is attached at asparagine 1189. EGF-like domains lie at 1213 to 1249 and 1254 to 1294; these read DVDN…RFCR and PSTV…EWCE. N-linked (GlcNAc...) asparagine glycans are attached at residues asparagine 1242 and asparagine 1264. In terms of domain architecture, EGF-like 19; calcium-binding spans 1296 to 1332; sequence DINECASDPCINGGLCRDLVNRFLCICDVAFAGERCE. A helical membrane pass occupies residues 1340–1360; the sequence is LLGIFTAVGSGTLALFFILLL. The Cytoplasmic portion of the chain corresponds to 1361–1405; it reads AGVASLIASNKRATQGTYSPSGQEKAGPRVEMWIRMPPPALERLI.

This sequence belongs to the Crumbs protein family. As to quaternary structure, component of a complex composed of PALS1, CRB1 and EPB41L5. Within the complex, interacts (via intracellular domain) with PALS1 and EPB41L5 (via FERM domain). Forms a complex with MPP4 and PALS1. Interacts with MPDZ/MUPP1 and MPP4. Post-translationally, glycosylated. In terms of tissue distribution, expressed in the kidney, lung, stomach and testis. Expressed in the brain. Expressed in the retina of the eye. Expressed in the outer nuclear layer, photoreceptor layer and inner nuclear layer of the retina. Expressed in Mueller cell radial processes in the inner nuclear layer, in apical processes sclerad to the external limiting membrane, and in the subapical region, adjacent to the adherens junction of retinal photoreceptors. In the brain, expressed in the granular layer of the cerebellum, the hippocampal dentate gyrus, the olfactory bulbs, the subventricular region lining the telencephalic ventricles and the rostral migratory stream. Ubiquitously expressed.

It is found in the apical cell membrane. Its subcellular location is the secreted. The protein localises to the cell projection. It localises to the cilium. The protein resides in the photoreceptor outer segment. It is found in the photoreceptor inner segment. Its subcellular location is the cytoplasm. The protein localises to the cell junction. It localises to the focal adhesion. Plays a role in photoreceptor morphogenesis in the retina. May maintain cell polarization and adhesion. In terms of biological role, may play a role in epidermal tissue morphogenesis. May function in cell attachment for stratified epithelial organization. This is Protein crumbs homolog 1 (Crb1) from Mus musculus (Mouse).